A 1411-amino-acid chain; its full sequence is Protein three rows (1411 aa).

The segment at 1065 to 1071 is separase cleavage-site; it reads VEPIRKQ. Disordered regions lie at residues 1221 to 1240, 1268 to 1301, and 1330 to 1411; these read LEPP…NISP, VRPA…KSPK, and AKST…RHRN. Low complexity-rich tracts occupy residues 1270–1289 and 1386–1398; these read PASS…NASS and TAEQ…TATP.

In terms of assembly, interacts with pim and Sse. Cleavage of thr contributes to inactivation of Sse.

The protein resides in the cytoplasm. Required specifically for chromosome disjunction during all mitoses; maternally provided protein is sufficient until mitosis 14 then zygotic protein is required. Involved in formation and/or maintenance of epithelial structures: bud extension during Malpighian tubule development, and foregut and hindgut morphogenesis. The protein is Protein three rows (thr) of Drosophila virilis (Fruit fly).